A 92-amino-acid chain; its full sequence is DNA-directed RNA polymerase subunit Rpo11 (92 aa).

The protein belongs to the archaeal Rpo11/eukaryotic RPB11/RPC19 RNA polymerase subunit family. Part of the RNA polymerase complex.

The protein localises to the cytoplasm. The enzyme catalyses RNA(n) + a ribonucleoside 5'-triphosphate = RNA(n+1) + diphosphate. In terms of biological role, DNA-dependent RNA polymerase (RNAP) catalyzes the transcription of DNA into RNA using the four ribonucleoside triphosphates as substrates. The polypeptide is DNA-directed RNA polymerase subunit Rpo11 (Methanosarcina mazei (strain ATCC BAA-159 / DSM 3647 / Goe1 / Go1 / JCM 11833 / OCM 88) (Methanosarcina frisia)).